Reading from the N-terminus, the 632-residue chain is Cell pattern formation-associated protein stuA (632 aa).

Residues 1–20 (MNQTQSYMDVHTSHFSSPQP) show a composition bias toward polar residues. The segment at 1-27 (MNQTQSYMDVHTSHFSSPQPYGSHGAT) is disordered. In terms of domain architecture, HTH APSES-type spans 128–234 (RVTATLWEDE…HNIGGLLYHP (107 aa)). The H-T-H motif DNA-binding region spans 162–183 (GTKLLNVAGMTRGRRDGILKSE). Disordered regions lie at residues 246–315 (DSQQ…ASSL), 340–386 (QNVP…KSYY), 403–460 (AHSL…QQEP), and 473–632 (NRNS…MRRR). Composition is skewed to polar residues over residues 254–264 (GSQTARTSQGP), 275–295 (MNGSVPSHMPQASASTPQTNG), 340–354 (QNVPIDNGLNSTRSM), and 364–376 (GNNLQGMPPYQNQ). Residues 377–386 (PAYDSSKSYY) are compositionally biased toward low complexity. Positions 428–438 (EQEHDEVKVDR) are enriched in basic and acidic residues. A compositionally biased stretch (polar residues) spans 473–506 (NRNSYTYTTNPSVSSLSGDHSQLGGSPSHQNGSD). Residues 558-576 (AYASNYSGYSSVNGSSMGS) are compositionally biased toward low complexity. Residues 578-604 (KRMRDDDDDHLSRSDGRENEYETKRRK) are nuclear localization domain. Basic and acidic residues predominate over residues 579-600 (RMRDDDDDHLSRSDGRENEYET).

This sequence belongs to the EFG1/PHD1/stuA family.

It is found in the nucleus. Functionally, transcription factor that regulates asexual reproduction. Binds the StuA-response elements (StRE) with the consensus sequence 5'-(A/T)CGCG(T/A)N(A/C)-3' at the promoters of target genes. Required for accurate spatial organization of the developing conidiophore. Primarily involved in the formation of the uninucleate sterigmata, which arise by budding in this multicellular structure. Required for metula and phialide formation during conidiation but is not required for dimorphic growth. The polypeptide is Cell pattern formation-associated protein stuA (Talaromyces marneffei (Penicillium marneffei)).